A 401-amino-acid chain; its full sequence is MSRVSQARNLGKYFLLIDNMLVVLGFFVVFPLVSIRFVDQMGWAAVMVGIALGLRQFIQQGLGIFGGAIADRFGAKPMIVTGMLMRAAGFATMGIAHEPWLLWFSCLLSGLGGTLFDPPRSALVVKLMPQQRGRFFSLLMMQDSAGAVIGALLGSWLLQYDFRLVCATGAVLFVLCAAFNAWLLPAWKLSTIRTPVREGMTRVMRDKRFVTYVLTLAGYYMLAVQVMLMLPIMVNDVAGAPSAVKWMYAIEACLSLTLLYPIARWSEKHFRLEHRLMAGLLIMSLSMMPVGMVSGLQQLFTLICLFYIGSIIAEPARETLSASLADARARGSYMGFSRLGLAIGGTIGYIGGGWLFDLGKSAHQPELPWMMLGIIGIFTFLALGWQFSQKRAARRLLERDA.

Residues 1-12 (MSRVSQARNLGK) are Cytoplasmic-facing. Residues 13–33 (YFLLIDNMLVVLGFFVVFPLV) traverse the membrane as a helical segment. Topologically, residues 34 to 98 (SIRFVDQMGW…GFATMGIAHE (65 aa)) are periplasmic. A helical membrane pass occupies residues 99–116 (PWLLWFSCLLSGLGGTLF). Residues 117 to 137 (DPPRSALVVKLMPQQRGRFFS) are Cytoplasmic-facing. The helical transmembrane segment at 138–158 (LLMMQDSAGAVIGALLGSWLL) threads the bilayer. Residues 159–163 (QYDFR) lie on the Periplasmic side of the membrane. A helical transmembrane segment spans residues 164–184 (LVCATGAVLFVLCAAFNAWLL). Residues 185–212 (PAWKLSTIRTPVREGMTRVMRDKRFVTY) lie on the Cytoplasmic side of the membrane. The chain crosses the membrane as a helical span at residues 213-233 (VLTLAGYYMLAVQVMLMLPIM). The Periplasmic portion of the chain corresponds to 234–242 (VNDVAGAPS). Residues 243 to 263 (AVKWMYAIEACLSLTLLYPIA) traverse the membrane as a helical segment. Residues 264–275 (RWSEKHFRLEHR) are Cytoplasmic-facing. The helical transmembrane segment at 276–296 (LMAGLLIMSLSMMPVGMVSGL) threads the bilayer. Over 297-298 (QQ) the chain is Periplasmic. Residues 299 to 319 (LFTLICLFYIGSIIAEPARET) form a helical membrane-spanning segment. Topologically, residues 320-338 (LSASLADARARGSYMGFSR) are cytoplasmic. Residues 339 to 359 (LGLAIGGTIGYIGGGWLFDLG) traverse the membrane as a helical segment. The Periplasmic segment spans residues 360–366 (KSAHQPE). The helical transmembrane segment at 367-387 (LPWMMLGIIGIFTFLALGWQF) threads the bilayer. Residues 388-401 (SQKRAARRLLERDA) are Cytoplasmic-facing.

Belongs to the major facilitator superfamily. DHA1 family. MdtH (TC 2.A.1.2.21) subfamily.

The protein resides in the cell inner membrane. The polypeptide is Multidrug resistance protein MdtH (Shigella dysenteriae serotype 1 (strain Sd197)).